We begin with the raw amino-acid sequence, 364 residues long: Chaperone protein DnaJ (364 aa).

One can recognise a J domain in the interval D5–G71. The CR-type zinc finger occupies G127 to Q205. Zn(2+)-binding residues include C140, C143, C157, C160, C179, C182, C193, and C196. 4 CXXCXGXG motif repeats span residues C140–G147, C157–G164, C179–G186, and C193–G200.

The protein belongs to the DnaJ family. As to quaternary structure, homodimer. Zn(2+) serves as cofactor.

The protein localises to the cytoplasm. Its function is as follows. Participates actively in the response to hyperosmotic and heat shock by preventing the aggregation of stress-denatured proteins and by disaggregating proteins, also in an autonomous, DnaK-independent fashion. Unfolded proteins bind initially to DnaJ; upon interaction with the DnaJ-bound protein, DnaK hydrolyzes its bound ATP, resulting in the formation of a stable complex. GrpE releases ADP from DnaK; ATP binding to DnaK triggers the release of the substrate protein, thus completing the reaction cycle. Several rounds of ATP-dependent interactions between DnaJ, DnaK and GrpE are required for fully efficient folding. Also involved, together with DnaK and GrpE, in the DNA replication of plasmids through activation of initiation proteins. This Ruthia magnifica subsp. Calyptogena magnifica protein is Chaperone protein DnaJ.